Here is a 215-residue protein sequence, read N- to C-terminus: 3,4-dihydroxy-2-butanone 4-phosphate synthase (215 aa).

Residues 38-39, Asp43, 151-155, and Glu175 each bind D-ribulose 5-phosphate; these read RE and RRGHT. Glu39 is a Mg(2+) binding site. Position 154 (His154) interacts with Mg(2+).

It belongs to the DHBP synthase family. As to quaternary structure, homodimer. Requires Mg(2+) as cofactor. Mn(2+) is required as a cofactor.

It catalyses the reaction D-ribulose 5-phosphate = (2S)-2-hydroxy-3-oxobutyl phosphate + formate + H(+). It participates in cofactor biosynthesis; riboflavin biosynthesis; 2-hydroxy-3-oxobutyl phosphate from D-ribulose 5-phosphate: step 1/1. Its function is as follows. Catalyzes the conversion of D-ribulose 5-phosphate to formate and 3,4-dihydroxy-2-butanone 4-phosphate. The sequence is that of 3,4-dihydroxy-2-butanone 4-phosphate synthase from Haemophilus influenzae (strain PittEE).